Reading from the N-terminus, the 476-residue chain is Thyroid receptor-interacting protein 6 (476 aa).

Positions 1–12 are enriched in pro residues; it reads MSGPTWLPPKQP. Disordered stretches follow at residues 1–93 and 108–253; these read MSGP…PGSL and NGGR…QPPE. Asymmetric dimethylarginine; alternate is present on Arg-25. At Arg-25 the chain carries Omega-N-methylarginine; alternate. Tyr-55 is subject to Phosphotyrosine; by SRC. Position 92 is a phosphoserine (Ser-92). The residue at position 111 (Arg-111) is an Omega-N-methylarginine. A Phosphoserine modification is found at Ser-142. Residues 152-167 show a composition bias toward low complexity; it reads PTPASYTTASTPAGPA. Arg-179 and Arg-186 each carry omega-N-methylarginine. Ser-189 carries the post-translational modification Phosphoserine. Omega-N-methylarginine is present on residues Arg-205, Arg-236, and Arg-238. Phosphoserine is present on Ser-249. LIM zinc-binding domains are found at residues 279 to 316, 339 to 398, and 399 to 467; these read CGGC…QLRG, CATC…FAPR, and CSVC…RIQE. The segment at 469 to 476 is interaction with MAGI1 and PTPN13; it reads SATVTTDC.

It belongs to the zyxin/ajuba family. Specifically interacts with the ligand binding domain of the thyroid receptor (TR) in the presence of thyroid hormone. Interacts (via the third LIM domain and C-terminus) with PTPN13 (via the second PDZ domain). Interacts (via the second LIM domain or via the third LIM domain plus C-terminus) with PDLIM4 (via PDZ domain). Found in a complex with PTPN13 and PDLIM4. Interacts with SVIL isoform 2. Interacts with LPAR2 but not other LPA receptors. Interacts with PRKAA2. Interacts with MAGI1. Interacts with SCRIB. In case of infection, interacts with S.typhimurium protein sseI. Post-translationally, phosphorylation at Tyr-55 by SRC is required for enhancement of lysophosphatidic acid-induced cell migration. Tyr-55 is dephosphorylated by PTPN13. In terms of tissue distribution, abundantly expressed in kidney, liver and lung. Lower levels in heart, placenta and pancreas. Expressed in colonic epithelial cells. Up-regulated in colonic tumors.

It localises to the cytoplasm. The protein localises to the cytoskeleton. It is found in the cell junction. Its subcellular location is the focal adhesion. The protein resides in the nucleus. In terms of biological role, relays signals from the cell surface to the nucleus to weaken adherens junction and promote actin cytoskeleton reorganization and cell invasiveness. Involved in lysophosphatidic acid-induced cell adhesion and migration. Acts as a transcriptional coactivator for NF-kappa-B and JUN, and mediates the transrepression of these transcription factors induced by glucocorticoid receptor. This Homo sapiens (Human) protein is Thyroid receptor-interacting protein 6 (TRIP6).